The following is a 379-amino-acid chain: Chaperone protein DnaJ (379 aa).

The J domain maps to 5-70; that stretch reads DYYEILGVPK…QKRAAYDQYG (66 aa). The CR-type zinc-finger motif lies at 134–212; that stretch reads GVTKEIRIPT…CHGHGRIEKT (79 aa). The Zn(2+) site is built by Cys-147, Cys-150, Cys-164, Cys-167, Cys-186, Cys-189, Cys-200, and Cys-203. CXXCXGXG motif repeat units follow at residues 147–154, 164–171, 186–193, and 200–207; these read CEVCHGSG, CPTCHGAG, CPHCQGRG, and CNSCHGHG.

Belongs to the DnaJ family. In terms of assembly, homodimer. Requires Zn(2+) as cofactor.

The protein localises to the cytoplasm. Functionally, participates actively in the response to hyperosmotic and heat shock by preventing the aggregation of stress-denatured proteins and by disaggregating proteins, also in an autonomous, DnaK-independent fashion. Unfolded proteins bind initially to DnaJ; upon interaction with the DnaJ-bound protein, DnaK hydrolyzes its bound ATP, resulting in the formation of a stable complex. GrpE releases ADP from DnaK; ATP binding to DnaK triggers the release of the substrate protein, thus completing the reaction cycle. Several rounds of ATP-dependent interactions between DnaJ, DnaK and GrpE are required for fully efficient folding. Also involved, together with DnaK and GrpE, in the DNA replication of plasmids through activation of initiation proteins. The chain is Chaperone protein DnaJ from Cronobacter sakazakii (strain ATCC BAA-894) (Enterobacter sakazakii).